A 415-amino-acid chain; its full sequence is Adenosylhomocysteinase (415 aa).

The substrate site is built by Thr53, Asp124, and Glu147. 148 to 150 (TTT) lines the NAD(+) pocket. Residues Lys177 and Asp181 each coordinate substrate. Residues Asn182, 211–216 (GYGWVG), Glu234, Asn269, 290–292 (SGH), and Asn337 each bind NAD(+).

It belongs to the adenosylhomocysteinase family. It depends on NAD(+) as a cofactor.

The protein localises to the cytoplasm. It carries out the reaction S-adenosyl-L-homocysteine + H2O = L-homocysteine + adenosine. The protein operates within amino-acid biosynthesis; L-homocysteine biosynthesis; L-homocysteine from S-adenosyl-L-homocysteine: step 1/1. Its function is as follows. May play a key role in the regulation of the intracellular concentration of adenosylhomocysteine. In Sulfolobus acidocaldarius (strain ATCC 33909 / DSM 639 / JCM 8929 / NBRC 15157 / NCIMB 11770), this protein is Adenosylhomocysteinase.